The primary structure comprises 1423 residues: Autophagy-related protein 11 (1423 aa).

2 coiled-coil regions span residues 551–589 and 625–978; these read DDEL…QSQA and SEGT…ASEL. 2 disordered regions span residues 583–660 and 1028–1048; these read LHRQ…SNRA and RAER…SLRK. Positions 585–602 are enriched in polar residues; the sequence is RQSQASRPGNLFQPQTNS. Residues 631-648 show a composition bias toward basic and acidic residues; it reads LLRRISELENELREEKQR. Polar residues-rich tracts occupy residues 650 to 660 and 1034 to 1047; these read SRIQNDLSNRA and QNPN…TSLR. Residues 1102–1130 adopt a coiled-coil conformation; that stretch reads HRIKEVEHKARKWQKEARSYRDRAHIAQK. Residues 1327–1423 form a disordered region; that stretch reads SLRAAAPETP…DYTYESPGKK (97 aa). Positions 1383–1395 are enriched in basic and acidic residues; that stretch reads KTAEPRRMLDRQE.

Belongs to the ATG11 family. In terms of assembly, homodimer and potential homooligomers. Interacts with ATG1 kinase and the ATG19 and ATG34 cargo protein transporters. Interacts with ATG9, ATG17 and ATG20.

The protein resides in the preautophagosomal structure membrane. The protein localises to the vacuole membrane. Involved in cytoplasm to vacuole transport (Cvt), pexophagy, mitophagy and nucleophagy. Recruits mitochondria for their selective degradation via autophagy (mitophagy) during starvation, through its interaction with ATG32. Works as scaffold proteins that recruit ATG proteins to the pre-autophagosome (PAS), the site of vesicle/autophagosome formation. Required for ATG9 anterograde transport from the mitochondria to the PAS. Also recruits the ATG19-prAPE1 complex to the PAS. Required for the Cvt vesicles completion. Plays a role in morphological differentiation and cephalosporin production. This chain is Autophagy-related protein 11, found in Hapsidospora chrysogena (Acremonium chrysogenum).